The primary structure comprises 441 residues: Transducin-like enhancer protein 7 (441 aa).

2 disordered regions span residues 1–77 (MSGE…QWHL) and 91–119 (PDAQ…SSSS). The span at 27 to 49 (ESSGVSSQPEPQVQQQLGSLLGV) shows a compositional bias: low complexity. Positions 62–76 (PADQETSTVTQQQWH) are enriched in polar residues. A compositionally biased stretch (low complexity) spans 108 to 119 (GSEVGQPYSSSS). WD repeat units lie at residues 156–194 (FHGK…AGEK), 204–243 (HPQD…QVRA), 247–285 (STGP…LIRK), 286–325 (HEVP…RLHQ), and 409–441 (EESS…QLLY).

It belongs to the WD repeat Groucho/TLE family.

The protein is Transducin-like enhancer protein 7 of Homo sapiens (Human).